The primary structure comprises 103 residues: Large ribosomal subunit protein bL21 (103 aa).

It belongs to the bacterial ribosomal protein bL21 family. In terms of assembly, part of the 50S ribosomal subunit. Contacts protein L20.

Its function is as follows. This protein binds to 23S rRNA in the presence of protein L20. The protein is Large ribosomal subunit protein bL21 of Nitrosomonas europaea (strain ATCC 19718 / CIP 103999 / KCTC 2705 / NBRC 14298).